The following is a 253-amino-acid chain: uncharacterized protein (253 aa).

The NADP(+) site is built by isoleucine 17, serine 36, aspartate 62, asparagine 89, tyrosine 158, lysine 162, valine 191, and threonine 193. Tyrosine 158 (proton donor) is an active-site residue. The Lowers pKa of active site Tyr role is filled by lysine 162.

It belongs to the short-chain dehydrogenases/reductases (SDR) family.

The protein resides in the cytoplasm. It is found in the nucleus. This is an uncharacterized protein from Schizosaccharomyces pombe (strain 972 / ATCC 24843) (Fission yeast).